Here is a 207-residue protein sequence, read N- to C-terminus: Phenazine biosynthesis protein PhzD1 (207 aa).

Catalysis depends on D38, which acts as the Proton donor. Substrate contacts are provided by residues Q78, R87, K122, and 151–155 (YAHVG).

It belongs to the isochorismatase family. Homodimer.

The enzyme catalyses (2S)-2-amino-4-deoxychorismate + H2O = (5S,6S)-6-amino-5-hydroxycyclohexa-1,3-diene-1-carboxyate + pyruvate. It functions in the pathway antibiotic biosynthesis; phenazine biosynthesis. In terms of biological role, involved in the biosynthesis of the antibiotic phenazine, a nitrogen-containing heterocyclic molecule. PhzD1 (operon phzA1B1C1E1F1G1) has a role in the biosynthesis of the phenazine during planktonic growth. Catalyzes the hydrolysis of the vinyl ether functional group of 2-amino-2-deoxyisochorismate (ADIC), yielding pyruvate and trans-2,3-dihydro-3-hydroxyanthranilic acid (DHHA). Also able to act on isochorismate, chorismate and 4-amino-4-deoxychorismate (ADC) as substrates. This is Phenazine biosynthesis protein PhzD1 from Pseudomonas aeruginosa (strain ATCC 15692 / DSM 22644 / CIP 104116 / JCM 14847 / LMG 12228 / 1C / PRS 101 / PAO1).